The primary structure comprises 672 residues: MAAEVLLSSLLGLLFLGLLLPARLTGGVGSLNLEELSEMRYGIQILPLPVMGGQSQASDVVVVSSKYKQRYECRLPAGAIHFQREREEETPAYQGPGIPELLSPMRDAPCLLKTKDWWTYEFCYGRHIQQYHMEDSEIKGDVLYLGHYQSSFNWDDETAKASKQHRLKRYHSQTYGNGSKCDLNGKPREAEVRFLCDEGAGISGDYIDRVDEPVSCSYVLTIRTSRLCPHPLLRPPASAAPQAILCHPALQPDEYMAYLQRQAESKQHEEKTTEEVQDTDRQVWSGSKAAGAPPKKEDVSPAKEEKESELWKLQGPEEQAAAREEAQAGEQDLNHEAAADPAPSPPNDFQNNVQVKLIRSPADLIRLIEELKAAEKGKPSVRREQPGDDTTEAPQREAEGTKAKGKDGEPPGLMEEEDGDDEEEEEEEEEDEEEQQLLGEFEKELEGMLLPSNRERLRSEVKAGMERELENIIQETEKELDPEGLRKESEREQAILALTSTLDKLIKRLQENQSPELVQKYKKRRVVPQKPPPSPHPTEEEPEHRVRVRVTKLRPGGPNRDLTVLEMNRENPQLKQIEGLVTEVLEREGLTAEGKIEIKIVRPGAEGKEEDTRWLTDEDTRNLKEIFFNILVQGAEEANKERQRQSELESNYRRVWGSPGGEDTGDLDEFDF.

A signal peptide spans 1–26 (MAAEVLLSSLLGLLFLGLLLPARLTG). The 123-residue stretch at 108–230 (APCLLKTKDW…TIRTSRLCPH (123 aa)) folds into the MRH domain. A disulfide bond links cysteine 110 and cysteine 123. A mannooligosaccharide derivative is bound by residues tryptophan 117, tryptophan 118, and glutamine 130. Asparagine 177 carries an N-linked (GlcNAc...) asparagine glycan. 2 disulfides stabilise this stretch: cysteine 181/cysteine 216 and cysteine 196/cysteine 228. A mannooligosaccharide derivative contacts are provided by aspartate 182, arginine 188, glutamate 212, and tyrosine 218. 4 disordered regions span residues 261–355 (RQAE…NVQV), 372–452 (KAAE…LLPS), 511–548 (ENQSPELVQKYKKRRVVPQKPPPSPHPTEEEPEHRVRV), and 637–672 (EANKERQRQSELESNYRRVWGSPGGEDTGDLDEFDF). Basic and acidic residues-rich tracts occupy residues 263–281 (AESKQHEEKTTEEVQDTDR), 294–310 (PKKEDVSPAKEEKESEL), 320–338 (AAAREEAQAGEQDLNHEAA), 372–386 (KAAEKGKPSVRREQP), and 394–409 (PQREAEGTKAKGKDGE). The segment covering 414-435 (MEEEDGDDEEEEEEEEEDEEEQ) has biased composition (acidic residues). Residues 637 to 652 (EANKERQRQSELESNY) are compositionally biased toward basic and acidic residues. Over residues 663 to 672 (DTGDLDEFDF) the composition is skewed to acidic residues.

This sequence belongs to the OS-9 family. As to quaternary structure, component of the HRD1 complex, which comprises at least SYNV1/HRD1, DERL1/2, FAM8A1, HERPUD1/HERP, OS9, SEL1L and UBE2J1. FAM8A1 is stabilized by interaction with SYNV1, which prevents its proteasomal degradation. OS9 and UBE2J1 recruitment to the complex may be mediated by SEL1L. Through this complex, may interact with ERLEC1 and HSPA5. Interacts (via C-terminus) with CPNE6 (via second C2 domain); this interaction occurs in a calcium-dependent manner in vitro. Interacts with CREB3. N-glycosylated. Post-translationally, intramolecular disulfide bonds.

The protein localises to the endoplasmic reticulum lumen. Its function is as follows. Lectin component of the HRD1 complex, which functions in endoplasmic reticulum (ER) quality control and ER-associated degradation (ERAD). Specifically recognizes and binds improperly folded glycoproteins as well as hyperglycosylated proteins, retain them in the ER, and transfers them to the ubiquitination machinery and promote their degradation. Possible targets include TRPV4 as well as hyperglycosylated HSP90B1. The chain is Protein OS-9 (Os9) from Mus musculus (Mouse).